The chain runs to 150 residues: D-aminoacyl-tRNA deacylase (150 aa).

Residues 138 to 139 (GP) carry the Gly-cisPro motif, important for rejection of L-amino acids motif.

Belongs to the DTD family. Homodimer.

It is found in the cytoplasm. It catalyses the reaction glycyl-tRNA(Ala) + H2O = tRNA(Ala) + glycine + H(+). The catalysed reaction is a D-aminoacyl-tRNA + H2O = a tRNA + a D-alpha-amino acid + H(+). Its function is as follows. An aminoacyl-tRNA editing enzyme that deacylates mischarged D-aminoacyl-tRNAs. Also deacylates mischarged glycyl-tRNA(Ala), protecting cells against glycine mischarging by AlaRS. Acts via tRNA-based rather than protein-based catalysis; rejects L-amino acids rather than detecting D-amino acids in the active site. By recycling D-aminoacyl-tRNA to D-amino acids and free tRNA molecules, this enzyme counteracts the toxicity associated with the formation of D-aminoacyl-tRNA entities in vivo and helps enforce protein L-homochirality. The protein is D-aminoacyl-tRNA deacylase of Christiangramia forsetii (strain DSM 17595 / CGMCC 1.15422 / KT0803) (Gramella forsetii).